The primary structure comprises 446 residues: Tubulin gamma chain (446 aa).

Residue 142-148 (AGGTGSG) coordinates GTP.

The protein belongs to the tubulin family. Interacts with mto1. Interacts with mto2.

Its subcellular location is the cytoplasm. The protein localises to the cytoskeleton. It localises to the microtubule organizing center. The protein resides in the spindle pole body. Tubulin is the major constituent of microtubules. The gamma chain is found at microtubule organizing centers (MTOC) such as the spindle poles or the centrosome, suggesting that it is involved in the minus-end nucleation of microtubule assembly. The chain is Tubulin gamma chain from Schizosaccharomyces pombe (strain 972 / ATCC 24843) (Fission yeast).